Reading from the N-terminus, the 293-residue chain is MSTTAAPEVELVETETPMGELALRVAVRGCRSVAAHQYHRGALRILRPHYLDDSGQVCYVVVNPGGAYLGADLYVIDVEVGDGAKLLLTTQSATKIYRTPGSFAEQRVCLRLGEGAQLELAPDQLIAYREASYRQNTRITVRPSSSLVMAEVVTPGWSPDGASFRYEELRLRNEIQVETPGGTGLLALDNLLIRPPLNDVTGMGFMEGYSHLGSLVVVDARVEQALADEFHALTAGHDACTGVSLTASVGGTTGLVLRSLSNSTEELNRLLGACTALLRERWYGQSPLNLRKY.

Belongs to the UreD family. UreD, UreF and UreG form a complex that acts as a GTP-hydrolysis-dependent molecular chaperone, activating the urease apoprotein by helping to assemble the nickel containing metallocenter of UreC. The UreE protein probably delivers the nickel.

The protein localises to the cytoplasm. Functionally, required for maturation of urease via the functional incorporation of the urease nickel metallocenter. The chain is Urease accessory protein UreD from Arthrobacter sp. (strain FB24).